The chain runs to 402 residues: Glutamate N-acetyltransferase (402 aa).

Residues threonine 151, lysine 178, threonine 189, glutamate 267, asparagine 397, and threonine 402 each coordinate substrate. Threonine 189 (nucleophile) is an active-site residue.

It belongs to the ArgJ family. In terms of assembly, heterotetramer of two alpha and two beta chains.

Its subcellular location is the cytoplasm. The enzyme catalyses N(2)-acetyl-L-ornithine + L-glutamate = N-acetyl-L-glutamate + L-ornithine. Its pathway is amino-acid biosynthesis; L-arginine biosynthesis; L-ornithine and N-acetyl-L-glutamate from L-glutamate and N(2)-acetyl-L-ornithine (cyclic): step 1/1. Functionally, catalyzes the transfer of the acetyl group from N(2)-acetylornithine to glutamate, forming N-acetylglutamate and L-ornithine. The polypeptide is Glutamate N-acetyltransferase (Methanothermobacter thermautotrophicus (strain ATCC 29096 / DSM 1053 / JCM 10044 / NBRC 100330 / Delta H) (Methanobacterium thermoautotrophicum)).